A 418-amino-acid chain; its full sequence is Serine protease inhibitor A3M (418 aa).

Positions methionine 1–cysteine 20 are cleaved as a signal peptide. 3 N-linked (GlcNAc...) asparagine glycosylation sites follow: asparagine 104, asparagine 184, and asparagine 269. The interval glycine 367–phenylalanine 392 is RCL.

The protein belongs to the serpin family. In terms of tissue distribution, expressed in liver and testis.

It is found in the secreted. The protein is Serine protease inhibitor A3M (Serpina3m) of Mus musculus (Mouse).